The chain runs to 558 residues: Formate--tetrahydrofolate ligase (558 aa).

An ATP-binding site is contributed by Thr-66–Thr-73.

It belongs to the formate--tetrahydrofolate ligase family.

It carries out the reaction (6S)-5,6,7,8-tetrahydrofolate + formate + ATP = (6R)-10-formyltetrahydrofolate + ADP + phosphate. It participates in one-carbon metabolism; tetrahydrofolate interconversion. The sequence is that of Formate--tetrahydrofolate ligase from Clostridioides difficile (strain 630) (Peptoclostridium difficile).